The sequence spans 265 residues: Imidazole glycerol phosphate synthase subunit HisF (265 aa).

Catalysis depends on residues Asp11 and Asp130.

Belongs to the HisA/HisF family. Heterodimer of HisH and HisF.

It localises to the cytoplasm. The catalysed reaction is 5-[(5-phospho-1-deoxy-D-ribulos-1-ylimino)methylamino]-1-(5-phospho-beta-D-ribosyl)imidazole-4-carboxamide + L-glutamine = D-erythro-1-(imidazol-4-yl)glycerol 3-phosphate + 5-amino-1-(5-phospho-beta-D-ribosyl)imidazole-4-carboxamide + L-glutamate + H(+). It participates in amino-acid biosynthesis; L-histidine biosynthesis; L-histidine from 5-phospho-alpha-D-ribose 1-diphosphate: step 5/9. Its function is as follows. IGPS catalyzes the conversion of PRFAR and glutamine to IGP, AICAR and glutamate. The HisF subunit catalyzes the cyclization activity that produces IGP and AICAR from PRFAR using the ammonia provided by the HisH subunit. This is Imidazole glycerol phosphate synthase subunit HisF from Idiomarina loihiensis (strain ATCC BAA-735 / DSM 15497 / L2-TR).